The primary structure comprises 387 residues: Formate-dependent phosphoribosylglycinamide formyltransferase (387 aa).

N(1)-(5-phospho-beta-D-ribosyl)glycinamide-binding positions include 12-13 (EL) and Glu72. Residues Arg104, Lys145, 150-155 (SSGKGQ), 185-188 (EEFI), and Glu193 each bind ATP. Residues 109–300 (DLAAKDLKLL…EFELHLRAIL (192 aa)) form the ATP-grasp domain. Residues Glu258 and Glu270 each coordinate Mg(2+). Residues Asp277, Lys348, and 355 to 356 (RR) contribute to the N(1)-(5-phospho-beta-D-ribosyl)glycinamide site.

It belongs to the PurK/PurT family. In terms of assembly, homodimer.

It carries out the reaction N(1)-(5-phospho-beta-D-ribosyl)glycinamide + formate + ATP = N(2)-formyl-N(1)-(5-phospho-beta-D-ribosyl)glycinamide + ADP + phosphate + H(+). It participates in purine metabolism; IMP biosynthesis via de novo pathway; N(2)-formyl-N(1)-(5-phospho-D-ribosyl)glycinamide from N(1)-(5-phospho-D-ribosyl)glycinamide (formate route): step 1/1. Functionally, involved in the de novo purine biosynthesis. Catalyzes the transfer of formate to 5-phospho-ribosyl-glycinamide (GAR), producing 5-phospho-ribosyl-N-formylglycinamide (FGAR). Formate is provided by PurU via hydrolysis of 10-formyl-tetrahydrofolate. This chain is Formate-dependent phosphoribosylglycinamide formyltransferase, found in Leptospira interrogans serogroup Icterohaemorrhagiae serovar copenhageni (strain Fiocruz L1-130).